Consider the following 386-residue polypeptide: Lipoyl synthase, mitochondrial (386 aa).

Cys-115, Cys-120, Cys-126, Cys-146, Cys-150, Cys-153, and Ser-362 together coordinate [4Fe-4S] cluster. Residues 131–351 enclose the Radical SAM core domain; the sequence is ETGTATATIM…QKLGMEMGFR (221 aa).

Belongs to the radical SAM superfamily. Lipoyl synthase family. [4Fe-4S] cluster is required as a cofactor.

Its subcellular location is the mitochondrion. It catalyses the reaction [[Fe-S] cluster scaffold protein carrying a second [4Fe-4S](2+) cluster] + N(6)-octanoyl-L-lysyl-[protein] + 2 oxidized [2Fe-2S]-[ferredoxin] + 2 S-adenosyl-L-methionine + 4 H(+) = [[Fe-S] cluster scaffold protein] + N(6)-[(R)-dihydrolipoyl]-L-lysyl-[protein] + 4 Fe(3+) + 2 hydrogen sulfide + 2 5'-deoxyadenosine + 2 L-methionine + 2 reduced [2Fe-2S]-[ferredoxin]. It participates in protein modification; protein lipoylation via endogenous pathway; protein N(6)-(lipoyl)lysine from octanoyl-[acyl-carrier-protein]: step 2/2. Catalyzes the radical-mediated insertion of two sulfur atoms into the C-6 and C-8 positions of the octanoyl moiety bound to the lipoyl domains of lipoate-dependent enzymes, thereby converting the octanoylated domains into lipoylated derivatives. The protein is Lipoyl synthase, mitochondrial of Picea sitchensis (Sitka spruce).